A 294-amino-acid polypeptide reads, in one-letter code: Ribosomal protein L11 methyltransferase (294 aa).

Residues T144, G165, D187, and N229 each contribute to the S-adenosyl-L-methionine site.

This sequence belongs to the methyltransferase superfamily. PrmA family.

It localises to the cytoplasm. The enzyme catalyses L-lysyl-[protein] + 3 S-adenosyl-L-methionine = N(6),N(6),N(6)-trimethyl-L-lysyl-[protein] + 3 S-adenosyl-L-homocysteine + 3 H(+). Methylates ribosomal protein L11. The sequence is that of Ribosomal protein L11 methyltransferase from Cellvibrio japonicus (strain Ueda107) (Pseudomonas fluorescens subsp. cellulosa).